A 327-amino-acid polypeptide reads, in one-letter code: tRNA dimethylallyltransferase (327 aa).

Residue 14-21 coordinates ATP; the sequence is GPTASGKT. Residue 16 to 21 coordinates substrate; that stretch reads TASGKT. Interaction with substrate tRNA stretches follow at residues 39-42 and 163-167; these read DSAL and QRIQR.

Belongs to the IPP transferase family. In terms of assembly, monomer. The cofactor is Mg(2+).

The enzyme catalyses adenosine(37) in tRNA + dimethylallyl diphosphate = N(6)-dimethylallyladenosine(37) in tRNA + diphosphate. Functionally, catalyzes the transfer of a dimethylallyl group onto the adenine at position 37 in tRNAs that read codons beginning with uridine, leading to the formation of N6-(dimethylallyl)adenosine (i(6)A). The sequence is that of tRNA dimethylallyltransferase from Xanthomonas axonopodis pv. citri (strain 306).